The following is a 71-amino-acid chain: UPF0434 protein Csal_1588 (71 aa).

This sequence belongs to the UPF0434 family.

The chain is UPF0434 protein Csal_1588 from Chromohalobacter salexigens (strain ATCC BAA-138 / DSM 3043 / CIP 106854 / NCIMB 13768 / 1H11).